Here is a 90-residue protein sequence, read N- to C-terminus: Probable Fe(2+)-trafficking protein (90 aa).

This sequence belongs to the Fe(2+)-trafficking protein family. In terms of assembly, monomer.

Functionally, could be a mediator in iron transactions between iron acquisition and iron-requiring processes, such as synthesis and/or repair of Fe-S clusters in biosynthetic enzymes. In Pectobacterium carotovorum subsp. carotovorum (strain PC1), this protein is Probable Fe(2+)-trafficking protein.